The sequence spans 648 residues: Transcription initiation factor TFIID subunit 5 (648 aa).

Low complexity predominate over residues 1 to 13 (MDSENSSSHSISS). A disordered region spans residues 1 to 21 (MDSENSSSHSISSPQMFQNTH). Positions 35 to 67 (MNNESLQMIIGYLRRNGLTETEELLTREAGPVL) constitute a LisH domain. 6 WD repeats span residues 317 to 358 (NAPI…KKLR), 392 to 431 (GHGG…NAVI), 433 to 472 (RTPA…PLRI), 475 to 514 (DPYG…RVRI), 517 to 556 (GHKA…LVAA), and 560 to 599 (EQAG…GTVL).

The protein belongs to the WD repeat TAF5 family. In terms of assembly, component of the TFIID basal transcription factor complex, composed of TATA-box-binding protein tbp-1, and a number of TBP-associated factors (TAFs).

Its subcellular location is the nucleus. Functionally, the TFIID basal transcription factor complex plays a major role in the initiation of RNA polymerase II (Pol II)-dependent transcription. TFIID recognizes and binds promoters via its subunit tbp-1, a TATA-box-binding protein, and promotes assembly of the pre-initiation complex (PIC). The TFIID complex consists of tbp-1 and TBP-associated factors (TAFs), including taf-5. Essential for early embryonic development, but not required for transcription of some genes; probably acts via activating transcription initiation by RNA Pol II, as part of the TFIID complex. In Caenorhabditis elegans, this protein is Transcription initiation factor TFIID subunit 5.